The sequence spans 255 residues: tRNA (guanine-N(1)-)-methyltransferase (255 aa).

S-adenosyl-L-methionine-binding positions include Gly117 and 137-142; that span reads LGDFVL.

Belongs to the RNA methyltransferase TrmD family. Homodimer.

It is found in the cytoplasm. The catalysed reaction is guanosine(37) in tRNA + S-adenosyl-L-methionine = N(1)-methylguanosine(37) in tRNA + S-adenosyl-L-homocysteine + H(+). Its function is as follows. Specifically methylates guanosine-37 in various tRNAs. The chain is tRNA (guanine-N(1)-)-methyltransferase from Paracidovorax citrulli (strain AAC00-1) (Acidovorax citrulli).